The sequence spans 283 residues: Thymidylate synthase (283 aa).

Arg-22 lines the dUMP pocket. Cys-160 acts as the Nucleophile in catalysis. Residues 180-183 (RSCD), Asn-191, and 221-223 (HIY) each bind dUMP. (6R)-5,10-methylene-5,6,7,8-tetrahydrofolate is bound at residue Asp-183. Ser-282 lines the (6R)-5,10-methylene-5,6,7,8-tetrahydrofolate pocket.

It belongs to the thymidylate synthase family. Bacterial-type ThyA subfamily. Homodimer.

The protein resides in the cytoplasm. It catalyses the reaction dUMP + (6R)-5,10-methylene-5,6,7,8-tetrahydrofolate = 7,8-dihydrofolate + dTMP. It participates in pyrimidine metabolism; dTTP biosynthesis. In terms of biological role, catalyzes the reductive methylation of 2'-deoxyuridine-5'-monophosphate (dUMP) to 2'-deoxythymidine-5'-monophosphate (dTMP) while utilizing 5,10-methylenetetrahydrofolate (mTHF) as the methyl donor and reductant in the reaction, yielding dihydrofolate (DHF) as a by-product. This enzymatic reaction provides an intracellular de novo source of dTMP, an essential precursor for DNA biosynthesis. This Aliivibrio fischeri (strain ATCC 700601 / ES114) (Vibrio fischeri) protein is Thymidylate synthase.